Consider the following 87-residue polypeptide: Small ribosomal subunit protein bS20 (87 aa).

This sequence belongs to the bacterial ribosomal protein bS20 family.

Binds directly to 16S ribosomal RNA. The chain is Small ribosomal subunit protein bS20 from Clostridium perfringens (strain ATCC 13124 / DSM 756 / JCM 1290 / NCIMB 6125 / NCTC 8237 / Type A).